The chain runs to 141 residues: ATP synthase epsilon chain (141 aa).

It belongs to the ATPase epsilon chain family. As to quaternary structure, F-type ATPases have 2 components, CF(1) - the catalytic core - and CF(0) - the membrane proton channel. CF(1) has five subunits: alpha(3), beta(3), gamma(1), delta(1), epsilon(1). CF(0) has three main subunits: a, b and c.

The protein localises to the cell inner membrane. In terms of biological role, produces ATP from ADP in the presence of a proton gradient across the membrane. This chain is ATP synthase epsilon chain, found in Pseudomonas fluorescens (strain ATCC BAA-477 / NRRL B-23932 / Pf-5).